The chain runs to 131 residues: MISKAIIKKVSIAPRKARLVVDLIRGKEIKVAKAILMFTPKSASSIVLKLLNSAEANLAQNINLKSNDFYISEVYVNEGIRLKRLFPRAKGSGDMIKKRTSHIVLKLSMAKEIKEEIKAKKKEVNIHGTKI.

Belongs to the universal ribosomal protein uL22 family. As to quaternary structure, part of the 50S ribosomal subunit.

Functionally, this protein binds specifically to 23S rRNA; its binding is stimulated by other ribosomal proteins, e.g. L4, L17, and L20. It is important during the early stages of 50S assembly. It makes multiple contacts with different domains of the 23S rRNA in the assembled 50S subunit and ribosome. In terms of biological role, the globular domain of the protein is located near the polypeptide exit tunnel on the outside of the subunit, while an extended beta-hairpin is found that lines the wall of the exit tunnel in the center of the 70S ribosome. In Phytoplasma mali (strain AT), this protein is Large ribosomal subunit protein uL22.